The sequence spans 222 residues: Cytochrome b6 (222 aa).

A helical transmembrane segment spans residues 39–59; it reads IFYCLGGITLVCFLVQFATGF. A heme c-binding site is contributed by Cys-42. Positions 93 and 107 each coordinate heme b. Helical transmembrane passes span 97–117, 123–143, and 193–213; these read ASMM…TGGF, LTWM…VTGY, and LHTF…FLMI. 2 residues coordinate heme b: His-194 and His-209.

This sequence belongs to the cytochrome b family. PetB subfamily. As to quaternary structure, the 4 large subunits of the cytochrome b6-f complex are cytochrome b6, subunit IV (17 kDa polypeptide, PetD), cytochrome f and the Rieske protein, while the 4 small subunits are PetG, PetL, PetM and PetN. The complex functions as a dimer. It depends on heme b as a cofactor. The cofactor is heme c.

It is found in the cellular thylakoid membrane. Its function is as follows. Component of the cytochrome b6-f complex, which mediates electron transfer between photosystem II (PSII) and photosystem I (PSI), cyclic electron flow around PSI, and state transitions. The protein is Cytochrome b6 of Crocosphaera subtropica (strain ATCC 51142 / BH68) (Cyanothece sp. (strain ATCC 51142)).